The primary structure comprises 1196 residues: DNA-directed RNA polymerase subunit beta (1196 aa).

This sequence belongs to the RNA polymerase beta chain family. In terms of assembly, the RNAP catalytic core consists of 2 alpha, 1 beta, 1 beta' and 1 omega subunit. When a sigma factor is associated with the core the holoenzyme is formed, which can initiate transcription.

It catalyses the reaction RNA(n) + a ribonucleoside 5'-triphosphate = RNA(n+1) + diphosphate. Functionally, DNA-dependent RNA polymerase catalyzes the transcription of DNA into RNA using the four ribonucleoside triphosphates as substrates. The chain is DNA-directed RNA polymerase subunit beta from Lactococcus lactis subsp. cremoris (strain SK11).